We begin with the raw amino-acid sequence, 439 residues long: Methylenetetrahydrofolate--tRNA-(uracil-5-)-methyltransferase TrmFO (439 aa).

Residue 8–13 participates in FAD binding; it reads GGGLAG.

It belongs to the MnmG family. TrmFO subfamily. FAD serves as cofactor.

It is found in the cytoplasm. The catalysed reaction is uridine(54) in tRNA + (6R)-5,10-methylene-5,6,7,8-tetrahydrofolate + NADH + H(+) = 5-methyluridine(54) in tRNA + (6S)-5,6,7,8-tetrahydrofolate + NAD(+). It catalyses the reaction uridine(54) in tRNA + (6R)-5,10-methylene-5,6,7,8-tetrahydrofolate + NADPH + H(+) = 5-methyluridine(54) in tRNA + (6S)-5,6,7,8-tetrahydrofolate + NADP(+). Functionally, catalyzes the folate-dependent formation of 5-methyl-uridine at position 54 (M-5-U54) in all tRNAs. The protein is Methylenetetrahydrofolate--tRNA-(uracil-5-)-methyltransferase TrmFO of Dictyoglomus turgidum (strain DSM 6724 / Z-1310).